Here is a 153-residue protein sequence, read N- to C-terminus: Endoribonuclease YbeY (153 aa).

Zn(2+)-binding residues include H112, H116, and H122.

This sequence belongs to the endoribonuclease YbeY family. It depends on Zn(2+) as a cofactor.

The protein resides in the cytoplasm. Single strand-specific metallo-endoribonuclease involved in late-stage 70S ribosome quality control and in maturation of the 3' terminus of the 16S rRNA. The chain is Endoribonuclease YbeY from Persephonella marina (strain DSM 14350 / EX-H1).